Consider the following 90-residue polypeptide: Putative septation protein SpoVG (90 aa).

This sequence belongs to the SpoVG family.

Could be involved in septation. In Clostridium perfringens (strain ATCC 13124 / DSM 756 / JCM 1290 / NCIMB 6125 / NCTC 8237 / Type A), this protein is Putative septation protein SpoVG.